We begin with the raw amino-acid sequence, 987 residues long: Ephrin type-B receptor 4a (987 aa).

Positions 1 to 24 (MELFSRNVAAFWIILLEFLLGSVA) are cleaved as a signal peptide. At 25–548 (EEEVLMNTKT…DSSSPLLVTG (524 aa)) the chain is on the extracellular side. An Eph LBD domain is found at 26–205 (EEVLMNTKTE…FFKKCPALTR (180 aa)). Disulfide bonds link cysteine 70–cysteine 187 and cysteine 104–cysteine 114. The disordered stretch occupies residues 319-340 (DSADTPCTRPPSSPRSPVPQVN). The segment covering 326 to 335 (TRPPSSPRSP) has biased composition (pro residues). 2 consecutive Fibronectin type-III domains span residues 328-438 (PPSS…TSPN) and 442-536 (LVSG…TLPD). A helical transmembrane segment spans residues 549-569 (ILIAMGMLLLIIVIGAAIYCI). Over 570 to 987 (RKQNNYKDPE…QNKAPGNVLY (418 aa)) the chain is Cytoplasmic. The 264-residue stretch at 621-884 (VKIEEVIGAG…NIVSALDKLI (264 aa)) folds into the Protein kinase domain. Residues 627–635 (IGAGEFGEV) and lysine 653 each bind ATP. The active-site Proton acceptor is the aspartate 746. The region spanning 914 to 978 (SSCGTVGDWL…LSSIEALGIQ (65 aa)) is the SAM domain.

It belongs to the protein kinase superfamily. Tyr protein kinase family. Ephrin receptor subfamily.

The protein resides in the cell membrane. It carries out the reaction L-tyrosyl-[protein] + ATP = O-phospho-L-tyrosyl-[protein] + ADP + H(+). Functionally, receptor tyrosine kinase which binds promiscuously transmembrane ephrin-B family ligands residing on adjacent cells, leading to contact-dependent bidirectional signaling into neighboring cells. The signaling pathway downstream of the receptor is referred to as forward signaling while the signaling pathway downstream of the ephrin ligand is referred to as reverse signaling. Together with its cognate ligand/functional ligand EFNB2 is involved in the regulation of cell adhesion and cell migration, and plays a central role in heart morphogenesis, angiogenesis and blood vessel remodeling and permeability. EPHB4-mediated forward signaling controls cellular repulsion and segregation from EFNB2-expressing cells. Involved in somitogenesis. The sequence is that of Ephrin type-B receptor 4a from Danio rerio (Zebrafish).